The primary structure comprises 1352 residues: Inhibitor of Bruton tyrosine kinase (1352 aa).

2 ANK repeats span residues 51–80 and 85–114; these read FGRN…DLLV and SGWT…SLYM. RCC1 repeat units lie at residues 141–194, 195–246, and 248–301; these read PTEV…FLSQ, KGQV…VLTD, and GCVY…LWTR. The BTB 1 domain occupies 565-645; the sequence is HDVTFQVGNR…MYTDTCDLLT (81 aa). Residues 692-716 are disordered; sequence AHTLSERQKSKPKSSKKGKGVGDDD. A compositionally biased stretch (basic residues) spans 701–710; sequence SKPKSSKKGK. The region spanning 769–837 is the BTB 2 domain; the sequence is YDVTMKSVDG…LYTDEAVVIK (69 aa). A disordered region spans residues 976-1002; sequence FKKAKTRAKKKPRKRSDSSGGYTLSDV. The segment covering 977-989 has biased composition (basic residues); sequence KKAKTRAKKKPRK. A Phosphoserine modification is found at Ser991. A compositionally biased stretch (polar residues) spans 993–1002; it reads SSGGYTLSDV. A phosphoserine mark is found at Ser1005, Ser1031, Ser1034, Ser1040, Ser1046, Ser1055, Ser1084, Ser1111, Ser1113, and Ser1116. The tract at residues 1032-1094 is disordered; sequence EGSYAGVASP…PTTKSAPQFI (63 aa). Residues 1084 to 1094 show a composition bias toward polar residues; sequence SPTTKSAPQFI.

Interacts with the PH domain of BTK.

It localises to the cytoplasm. The protein localises to the membrane. Its function is as follows. Acts as an inhibitor of BTK tyrosine kinase activity, thereby playing a role in B-cell development. Down-regulates BTK kinase activity, leading to interference with BTK-mediated calcium mobilization and NF-kappa-B-driven transcription. The protein is Inhibitor of Bruton tyrosine kinase (Ibtk) of Mus musculus (Mouse).